The sequence spans 403 residues: Dynactin subunit 2 (403 aa).

The interval 1-26 is disordered; that stretch reads MADPKYADLPGIARNEPDVYETSDLP. A2 is modified (N-acetylalanine). Y6 carries the post-translational modification Phosphotyrosine. The residue at position 83 (S83) is a Phosphoserine. Phosphotyrosine is present on Y86. Residues 100-130 adopt a coiled-coil conformation; the sequence is QQKYQRLLHEVQELTTEVEKIKTTVKESATE. Phosphothreonine is present on residues T134 and T200. Residues 184–204 form a disordered region; it reads TKNSKGTGSGGKTTSGTPPDS. Residues 216 to 248 adopt a coiled-coil conformation; sequence EQDKFSQAAKVAELEKRLTELEATVRCDQDAQN. Position 322 is a phosphoserine (S322).

It belongs to the dynactin subunit 2 family. In terms of assembly, subunit of dynactin, a multiprotein complex part of a tripartite complex with dynein and a adapter, such as BICDL1, BICD2 or HOOK3. The dynactin complex is built around ACTR1A/ACTB filament and consists of an actin-related filament composed of a shoulder domain, a pointed end and a barbed end. Its length is defined by its flexible shoulder domain. The soulder is composed of 2 DCTN1 subunits, 4 DCTN2 and 2 DCTN3. The 4 DCNT2 (via N-terminus) bind the ACTR1A filament and act as molecular rulers to determine the length. The pointed end is important for binding dynein-dynactin cargo adapters and consists of 4 subunits: ACTR10, DCNT4, DCTN5 and DCTN6. The barbed end is composed of a CAPZA1:CAPZB heterodimers, which binds ACTR1A/ACTB filament and dynactin and stabilizes dynactin. Interacts with BICD2 and CEP135. Interacts with DYNAP. Interacts with ECPAS. Interacts with MAPRE1.

The protein localises to the cytoplasm. Its subcellular location is the cytoskeleton. It localises to the microtubule organizing center. It is found in the centrosome. The protein resides in the membrane. Functionally, part of the dynactin complex that activates the molecular motor dynein for ultra-processive transport along microtubules. In the dynactin soulder domain, binds the ACTR1A filament and acts as a molecular ruler to determine the length. Modulates cytoplasmic dynein binding to an organelle, and plays a role in prometaphase chromosome alignment and spindle organization during mitosis. Involved in anchoring microtubules to centrosomes. May play a role in synapse formation during brain development. This chain is Dynactin subunit 2 (DCTN2), found in Bos taurus (Bovine).